The following is a 124-amino-acid chain: Putative ankyrin repeat protein RF_1087 (124 aa).

3 ANK repeats span residues 17–46 (NDQK…NPNI), 50–79 (NGET…IIDS), and 83–112 (FERT…TIGN).

This is Putative ankyrin repeat protein RF_1087 from Rickettsia felis (strain ATCC VR-1525 / URRWXCal2) (Rickettsia azadi).